We begin with the raw amino-acid sequence, 38 residues long: Putative defensin-like protein 105 (38 aa).

3 disulfide bridges follow: C5-C27, C13-C33, and C17-C34.

Belongs to the DEFL family.

The protein is Putative defensin-like protein 105 of Arabidopsis thaliana (Mouse-ear cress).